A 222-amino-acid polypeptide reads, in one-letter code: Myosin regulatory light chain 2 (222 aa).

Positions 1-65 (MADEKKKVKK…RGSRKSKRAG (65 aa)) are disordered. The residue at position 2 (Ala2) is an N-acetylalanine. Positions 19–53 (TSETASEAASEAATPAPAATPAPAASATGSKRASG) are enriched in low complexity. A phosphoserine mark is found at Ser66 and Ser67. EF-hand domains lie at 75–110 (KQIA…VGKI), 147–180 (DEDE…FGDK), and 181–216 (FTMK…KGEE). Residues Asp88, Asp90, Asp92, and Asp99 each coordinate Ca(2+).

As to quaternary structure, myosin is a hexamer of 2 heavy chains and 4 light chains.

The sequence is that of Myosin regulatory light chain 2 (Mlc2) from Drosophila melanogaster (Fruit fly).